The chain runs to 358 residues: Uroporphyrinogen decarboxylase (358 aa).

Substrate contacts are provided by residues 27 to 31 (RQAGR), Asp-77, Tyr-154, Ser-209, and His-330.

The protein belongs to the uroporphyrinogen decarboxylase family. In terms of assembly, homodimer.

The protein resides in the cytoplasm. It catalyses the reaction uroporphyrinogen III + 4 H(+) = coproporphyrinogen III + 4 CO2. The protein operates within porphyrin-containing compound metabolism; protoporphyrin-IX biosynthesis; coproporphyrinogen-III from 5-aminolevulinate: step 4/4. Functionally, catalyzes the decarboxylation of four acetate groups of uroporphyrinogen-III to yield coproporphyrinogen-III. The polypeptide is Uroporphyrinogen decarboxylase (Acinetobacter baylyi (strain ATCC 33305 / BD413 / ADP1)).